Consider the following 236-residue polypeptide: 2,3,4,5-tetrahydropyridine-2,6-dicarboxylate N-acetyltransferase (236 aa).

Belongs to the transferase hexapeptide repeat family. DapH subfamily.

The catalysed reaction is (S)-2,3,4,5-tetrahydrodipicolinate + acetyl-CoA + H2O = L-2-acetamido-6-oxoheptanedioate + CoA. It participates in amino-acid biosynthesis; L-lysine biosynthesis via DAP pathway; LL-2,6-diaminopimelate from (S)-tetrahydrodipicolinate (acetylase route): step 1/3. Catalyzes the transfer of an acetyl group from acetyl-CoA to tetrahydrodipicolinate. The sequence is that of 2,3,4,5-tetrahydropyridine-2,6-dicarboxylate N-acetyltransferase from Bacillus subtilis (strain 168).